We begin with the raw amino-acid sequence, 492 residues long: Ketol-acid reductoisomerase (NADP(+)) (492 aa).

In terms of domain architecture, KARI N-terminal Rossmann spans 17 to 208 (LGQCRLMKKN…GSNKAGVLES (192 aa)). NADP(+)-binding positions include 45 to 48 (CGSQ), arginine 68, serine 76, and serine 78. Residue histidine 132 is part of the active site. Residue glycine 158 participates in NADP(+) binding. 2 KARI C-terminal knotted domains span residues 209 to 344 (SFVA…KAPV) and 345 to 487 (YCET…MKDM). Aspartate 217, glutamate 221, glutamate 389, and glutamate 393 together coordinate Mg(2+). Serine 414 provides a ligand contact to substrate.

This sequence belongs to the ketol-acid reductoisomerase family. Requires Mg(2+) as cofactor.

The enzyme catalyses (2R)-2,3-dihydroxy-3-methylbutanoate + NADP(+) = (2S)-2-acetolactate + NADPH + H(+). It carries out the reaction (2R,3R)-2,3-dihydroxy-3-methylpentanoate + NADP(+) = (S)-2-ethyl-2-hydroxy-3-oxobutanoate + NADPH + H(+). Its pathway is amino-acid biosynthesis; L-isoleucine biosynthesis; L-isoleucine from 2-oxobutanoate: step 2/4. It functions in the pathway amino-acid biosynthesis; L-valine biosynthesis; L-valine from pyruvate: step 2/4. Functionally, involved in the biosynthesis of branched-chain amino acids (BCAA). Catalyzes an alkyl-migration followed by a ketol-acid reduction of (S)-2-acetolactate (S2AL) to yield (R)-2,3-dihydroxy-isovalerate. In the isomerase reaction, S2AL is rearranged via a Mg-dependent methyl migration to produce 3-hydroxy-3-methyl-2-ketobutyrate (HMKB). In the reductase reaction, this 2-ketoacid undergoes a metal-dependent reduction by NADPH to yield (R)-2,3-dihydroxy-isovalerate. The chain is Ketol-acid reductoisomerase (NADP(+)) from Blochmanniella floridana.